We begin with the raw amino-acid sequence, 941 residues long: Isoleucine--tRNA ligase (941 aa).

Positions 59–69 (PYANGNIHIGH) match the 'HIGH' region motif. Glu-562 contributes to the L-isoleucyl-5'-AMP binding site. The 'KMSKS' region motif lies at 603 to 607 (KMSKS). ATP is bound at residue Lys-606. 4 residues coordinate Zn(2+): Cys-904, Cys-907, Cys-924, and Cys-927.

The protein belongs to the class-I aminoacyl-tRNA synthetase family. IleS type 1 subfamily. In terms of assembly, monomer. Zn(2+) serves as cofactor.

It is found in the cytoplasm. It carries out the reaction tRNA(Ile) + L-isoleucine + ATP = L-isoleucyl-tRNA(Ile) + AMP + diphosphate. Functionally, catalyzes the attachment of isoleucine to tRNA(Ile). As IleRS can inadvertently accommodate and process structurally similar amino acids such as valine, to avoid such errors it has two additional distinct tRNA(Ile)-dependent editing activities. One activity is designated as 'pretransfer' editing and involves the hydrolysis of activated Val-AMP. The other activity is designated 'posttransfer' editing and involves deacylation of mischarged Val-tRNA(Ile). This Haemophilus influenzae (strain PittEE) protein is Isoleucine--tRNA ligase.